Here is an 880-residue protein sequence, read N- to C-terminus: DNA mismatch repair protein MutS (880 aa).

ATP is bound at residue Gly-624–Ser-631.

Belongs to the DNA mismatch repair MutS family.

This protein is involved in the repair of mismatches in DNA. It is possible that it carries out the mismatch recognition step. This protein has a weak ATPase activity. The protein is DNA mismatch repair protein MutS of Alkaliphilus metalliredigens (strain QYMF).